The following is a 172-amino-acid chain: 3-phenylpropionate/cinnamic acid dioxygenase subunit beta (172 aa).

This sequence belongs to the bacterial ring-hydroxylating dioxygenase beta subunit family. As to quaternary structure, this dioxygenase system consists of four proteins: the two subunits of the hydroxylase component (HcaE and HcaF), a ferredoxin (HcaC) and a ferredoxin reductase (HcaD).

The enzyme catalyses 3-phenylpropanoate + NADH + O2 + H(+) = 3-(cis-5,6-dihydroxycyclohexa-1,3-dien-1-yl)propanoate + NAD(+). The catalysed reaction is (E)-cinnamate + NADH + O2 + H(+) = (2E)-3-(cis-5,6-dihydroxycyclohexa-1,3-dien-1-yl)prop-2-enoate + NAD(+). It functions in the pathway aromatic compound metabolism; 3-phenylpropanoate degradation. Functionally, part of the multicomponent 3-phenylpropionate dioxygenase. Converts 3-phenylpropionic acid (PP) and cinnamic acid (CI) into 3-phenylpropionate-dihydrodiol (PP-dihydrodiol) and cinnamic acid-dihydrodiol (CI-dihydrodiol), respectively. In Escherichia coli O157:H7, this protein is 3-phenylpropionate/cinnamic acid dioxygenase subunit beta.